We begin with the raw amino-acid sequence, 97 residues long: YcgL domain-containing protein Avin_32960 (97 aa).

Residues 3–87 (CICSIYKSPR…PEEEYVEHLP (85 aa)) enclose the YcgL domain.

The sequence is that of YcgL domain-containing protein Avin_32960 from Azotobacter vinelandii (strain DJ / ATCC BAA-1303).